The chain runs to 370 residues: NSFL1 cofactor p47 (370 aa).

The disordered stretch occupies residues 54-73 (SQATPSSVSRGTAPSDNRVT). 4 positions are modified to phosphoserine: Ser74, Ser102, Ser114, and Ser140. Disordered regions lie at residues 80 to 116 (HDQD…KSPN) and 138 to 157 (TKSP…GYRL). Positions 109 to 115 (PPRKKSP) match the Nuclear localization signal motif. Tyr167 bears the Phosphotyrosine mark. The short motif at 172 to 175 (RRRH) is the Nuclear localization signal element. 3 positions are modified to phosphoserine: Ser176, Ser192, and Ser272. One can recognise an SEP domain in the interval 179–244 (DVHVVLKLWK…MEDHRDEDFV (66 aa)). The UBX domain occupies 291-368 (EAEPTTNIQI…NLLNAVIVQR (78 aa)).

This sequence belongs to the NSFL1C family. Part of a ternary complex containing STX5A, NSFL1C and VCP. NSFL1C forms a homotrimer that binds to one end of a VCP homohexamer. The complex binds to membranes enriched in phosphatidylethanolamine-containing lipids and promotes Golgi membrane fusion. Interaction with VCIP135 leads to dissociation of the complex via ATP hydrolysis by VCP. Binds ubiquitin and mono-ubiquitinated proteins via its N-terminal UBA-like domain when bound to VCP. Phosphorylated during mitosis. Phosphorylation inhibits interaction with Golgi membranes and is required for the fragmentation of the Golgi stacks during mitosis.

It is found in the nucleus. The protein resides in the golgi apparatus. It localises to the golgi stack. The protein localises to the chromosome. Its subcellular location is the cytoplasm. It is found in the cytoskeleton. The protein resides in the microtubule organizing center. It localises to the centrosome. In terms of biological role, reduces the ATPase activity of VCP. Necessary for the fragmentation of Golgi stacks during mitosis and for VCP-mediated reassembly of Golgi stacks after mitosis. May play a role in VCP-mediated formation of transitional endoplasmic reticulum (tER). Inhibits the activity of CTSL (in vitro). Together with UBXN2B/p37, regulates the centrosomal levels of kinase AURKA/Aurora A during mitotic progression by promoting AURKA removal from centrosomes in prophase. Also, regulates spindle orientation during mitosis. The sequence is that of NSFL1 cofactor p47 (Nsfl1c) from Mus musculus (Mouse).